Consider the following 551-residue polypeptide: CTP synthase (551 aa).

An amidoligase domain region spans residues 1-267 (MPKYVFVTGG…GRYVMEHLGW (267 aa)). A CTP-binding site is contributed by S13. S13 contacts UTP. 14–19 (SVGKGI) provides a ligand contact to ATP. L-glutamine is bound at residue Y54. Residue D71 coordinates ATP. Residues D71 and E141 each coordinate Mg(2+). CTP contacts are provided by residues 148 to 150 (DIE), 188 to 193 (KTKPTQ), and K224. UTP-binding positions include 188–193 (KTKPTQ) and K224. A Glutamine amidotransferase type-1 domain is found at 292-532 (RIALVGKYVE…IGVAKHVLRE (241 aa)). Position 353 (G353) interacts with L-glutamine. Residue C380 is the Nucleophile; for glutamine hydrolysis of the active site. L-glutamine-binding positions include 381–384 (YGLH), E404, and R460. Active-site residues include H505 and E507.

Belongs to the CTP synthase family. In terms of assembly, homotetramer.

The enzyme catalyses UTP + L-glutamine + ATP + H2O = CTP + L-glutamate + ADP + phosphate + 2 H(+). It catalyses the reaction L-glutamine + H2O = L-glutamate + NH4(+). It carries out the reaction UTP + NH4(+) + ATP = CTP + ADP + phosphate + 2 H(+). It functions in the pathway pyrimidine metabolism; CTP biosynthesis via de novo pathway; CTP from UDP: step 2/2. With respect to regulation, allosterically activated by GTP, when glutamine is the substrate; GTP has no effect on the reaction when ammonia is the substrate. The allosteric effector GTP functions by stabilizing the protein conformation that binds the tetrahedral intermediate(s) formed during glutamine hydrolysis. Inhibited by the product CTP, via allosteric rather than competitive inhibition. Catalyzes the ATP-dependent amination of UTP to CTP with either L-glutamine or ammonia as the source of nitrogen. Regulates intracellular CTP levels through interactions with the four ribonucleotide triphosphates. This Thermomicrobium roseum (strain ATCC 27502 / DSM 5159 / P-2) protein is CTP synthase.